A 161-amino-acid chain; its full sequence is Protein-export protein SecB (161 aa).

The protein belongs to the SecB family. In terms of assembly, homotetramer, a dimer of dimers. One homotetramer interacts with 1 SecA dimer.

The protein resides in the cytoplasm. In terms of biological role, one of the proteins required for the normal export of preproteins out of the cell cytoplasm. It is a molecular chaperone that binds to a subset of precursor proteins, maintaining them in a translocation-competent state. It also specifically binds to its receptor SecA. The polypeptide is Protein-export protein SecB (Shewanella sp. (strain MR-7)).